Reading from the N-terminus, the 246-residue chain is MPISFAAPIEVIVLDIEGTVCPISFVKTTLFPYFLEKLPSELSALTYPLKSTSNSPVEEICSQFPENVRVSSDSLLEYTTSLVNNDIKDPILKSLQGFIWKLGYENGELMAPVYEDAIEFVTDLSKTRKIYIYSSGSIKAQVLLFGHVKGANGSPVDMNRYLSGYYDITTAGFKQESGSYVSILKDIGYESKQSSVLFLSDNVREVDAAIQAGMNSLVVDRPGNAPLSEADKKSFSIIETFRDLKL.

Mg(2+) is bound by residues Asp-15 and Glu-17. Residues Ser-134–Ser-135 and Lys-174 contribute to the substrate site. Asp-201 contributes to the Mg(2+) binding site.

It belongs to the HAD-like hydrolase superfamily. MasA/MtnC family. Monomer. The cofactor is Mg(2+).

It is found in the cytoplasm. The protein localises to the nucleus. The enzyme catalyses 5-methylsulfanyl-2,3-dioxopentyl phosphate + H2O = 1,2-dihydroxy-5-(methylsulfanyl)pent-1-en-3-one + phosphate. Its pathway is amino-acid biosynthesis; L-methionine biosynthesis via salvage pathway; L-methionine from S-methyl-5-thio-alpha-D-ribose 1-phosphate: step 3/6. It participates in amino-acid biosynthesis; L-methionine biosynthesis via salvage pathway; L-methionine from S-methyl-5-thio-alpha-D-ribose 1-phosphate: step 4/6. In terms of biological role, bifunctional enzyme that catalyzes the enolization of 2,3-diketo-5-methylthiopentyl-1-phosphate (DK-MTP-1-P) into the intermediate 2-hydroxy-3-keto-5-methylthiopentenyl-1-phosphate (HK-MTPenyl-1-P), which is then dephosphorylated to form the acireductone 1,2-dihydroxy-3-keto-5-methylthiopentene (DHK-MTPene). The polypeptide is Enolase-phosphatase E1 (Debaryomyces hansenii (strain ATCC 36239 / CBS 767 / BCRC 21394 / JCM 1990 / NBRC 0083 / IGC 2968) (Yeast)).